The chain runs to 299 residues: Oxygen-dependent coproporphyrinogen-III oxidase (299 aa).

S92 is a binding site for substrate. The a divalent metal cation site is built by H96 and H106. The active-site Proton donor is H106. 108–110 contributes to the substrate binding site; sequence NVR. A divalent metal cation contacts are provided by H145 and H175. Residues 239–274 form an important for dimerization region; it reads YVEFNLVYDRGTLFGLQSGGRAESILMSLPPRVRWE. 257–259 provides a ligand contact to substrate; that stretch reads GGR.

This sequence belongs to the aerobic coproporphyrinogen-III oxidase family. In terms of assembly, homodimer. A divalent metal cation is required as a cofactor.

It is found in the cytoplasm. The enzyme catalyses coproporphyrinogen III + O2 + 2 H(+) = protoporphyrinogen IX + 2 CO2 + 2 H2O. It participates in porphyrin-containing compound metabolism; protoporphyrin-IX biosynthesis; protoporphyrinogen-IX from coproporphyrinogen-III (O2 route): step 1/1. Functionally, involved in the heme biosynthesis. Catalyzes the aerobic oxidative decarboxylation of propionate groups of rings A and B of coproporphyrinogen-III to yield the vinyl groups in protoporphyrinogen-IX. The polypeptide is Oxygen-dependent coproporphyrinogen-III oxidase (Xanthomonas euvesicatoria pv. vesicatoria (strain 85-10) (Xanthomonas campestris pv. vesicatoria)).